The chain runs to 200 residues: Recombination protein RecR (200 aa).

The C4-type zinc finger occupies 58–75 (CSTCFCLKNLPESNCEFC). The Toprim domain maps to 82 to 177 (STLCIVATPK…SISRLALGLP (96 aa)).

Belongs to the RecR family.

Its function is as follows. May play a role in DNA repair. It seems to be involved in an RecBC-independent recombinational process of DNA repair. It may act with RecF and RecO. This Chlamydia caviae (strain ATCC VR-813 / DSM 19441 / 03DC25 / GPIC) (Chlamydophila caviae) protein is Recombination protein RecR.